The following is a 212-amino-acid chain: Large ribosomal subunit protein uL3 (212 aa).

Positions 128 to 146 are enriched in basic residues; sequence RHGASRGPMKHGSKYHRRT. The segment at 128 to 164 is disordered; sequence RHGASRGPMKHGSKYHRRTGSLGAKGPARVFKGRNLP.

Belongs to the universal ribosomal protein uL3 family. Part of the 50S ribosomal subunit. Forms a cluster with proteins L14 and L19.

In terms of biological role, one of the primary rRNA binding proteins, it binds directly near the 3'-end of the 23S rRNA, where it nucleates assembly of the 50S subunit. This Desulfitobacterium hafniense (strain Y51) protein is Large ribosomal subunit protein uL3.